The following is a 535-amino-acid chain: Cytochrome P450 monooxygenase claQ (535 aa).

The next 2 membrane-spanning stretches (helical) occupy residues 7–27 (IGTW…KLVG) and 225–245 (YFAI…NLPT). Heme is bound at residue Cys472.

It belongs to the cytochrome P450 family. It depends on heme as a cofactor.

The protein resides in the membrane. It participates in secondary metabolite biosynthesis; terpenoid biosynthesis. Functionally, cytochrome P450 monooxygenase; part of the gene cluster that mediates the biosynthesis of clavilactone A, a meroterpenoid that features a unique benzo-fused ten-membered carbocyclic ring unit with an alpha,beta-epoxy-gamma-lactone moiety, forming an intriguing 10/5/3 tricyclic nested skeleton. Cytochrome P450 monooxygenases claO, claP, claQ, claU, and claW are close orthologs, suggesting that a redundant function or pseudogenes are present in the cla cluster. These monoxygenases are not involved in clavilactone A biosynthesis nor its modification. ClaR, ClaS and ClaT are sufficient to produce clavilactone A. The biosynthesis begins with the prenyltransferase claS that transfers geranyl pyrophosphate (GPP) to hydroquinone to produces geranylhydroquinone. The cytochrome P450 monooxygenase claR then catalyzes the diradical coupling reaction between the intramolecular hydroquinone and allyl moieties to form the benzo-fused ten-membered carbocyclic ring unit of wigantol. Finally the cytochrome P450 monooxygenase claT exquisitely and stereoselectively assembles the alpha,beta-epoxy-gamma-lactone moiety, producing clavilactone A via arnebinol A. This is Cytochrome P450 monooxygenase claQ from Ampulloclitocybe clavipes (Club foot).